Here is a 164-residue protein sequence, read N- to C-terminus: uncharacterized protein (164 aa).

Positions 1–29 are enriched in polar residues; it reads MLCVRSSSSNLESDTYLSRYSTRASAGTG. Residues 1 to 62 form a disordered region; it reads MLCVRSSSSN…SKPSNNKNID (62 aa). The span at 43–62 shows a compositional bias: low complexity; that stretch reads SSDSSSSSSESKPSNNKNID.

This is an uncharacterized protein from Schizosaccharomyces pombe (strain 972 / ATCC 24843) (Fission yeast).